Reading from the N-terminus, the 431-residue chain is Ribosome assembly protein SQT1 (431 aa).

6 WD repeats span residues 63–102 (KHTD…PKFA), 107–146 (GYGE…AQWK), 149–192 (SQMQ…GSLE), 199–243 (VHQQ…QLFK), 309–348 (ELDA…VRHK), and 350–387 (VLED…EKFV).

Interacts strongly with QSR1. Part of an oligomeric protein complex that is loosely associated with ribosomes.

In terms of biological role, may be involved in the late step of 60S ribosomal subunit assembly or modification in the cytoplasm. The protein is Ribosome assembly protein SQT1 (SQT1) of Saccharomyces cerevisiae (strain ATCC 204508 / S288c) (Baker's yeast).